The primary structure comprises 145 residues: 3-hydroxyacyl-[acyl-carrier-protein] dehydratase FabZ (145 aa).

H47 is an active-site residue.

Belongs to the thioester dehydratase family. FabZ subfamily.

It localises to the cytoplasm. The enzyme catalyses a (3R)-hydroxyacyl-[ACP] = a (2E)-enoyl-[ACP] + H2O. Its function is as follows. Involved in unsaturated fatty acids biosynthesis. Catalyzes the dehydration of short chain beta-hydroxyacyl-ACPs and long chain saturated and unsaturated beta-hydroxyacyl-ACPs. In Methylobacillus flagellatus (strain ATCC 51484 / DSM 6875 / VKM B-1610 / KT), this protein is 3-hydroxyacyl-[acyl-carrier-protein] dehydratase FabZ.